A 341-amino-acid polypeptide reads, in one-letter code: Methionine import ATP-binding protein MetN 1 (341 aa).

One can recognise an ABC transporter domain in the interval 2–241 (IEFRQVSKSF…PKTTIAQNFV (240 aa)). 38-45 (GYSGAGKS) serves as a coordination point for ATP.

Belongs to the ABC transporter superfamily. Methionine importer (TC 3.A.1.24) family. As to quaternary structure, the complex is composed of two ATP-binding proteins (MetN), two transmembrane proteins (MetI) and a solute-binding protein (MetQ).

Its subcellular location is the cell membrane. The catalysed reaction is L-methionine(out) + ATP + H2O = L-methionine(in) + ADP + phosphate + H(+). It carries out the reaction D-methionine(out) + ATP + H2O = D-methionine(in) + ADP + phosphate + H(+). Functionally, part of the ABC transporter complex MetNIQ involved in methionine import. Responsible for energy coupling to the transport system. This is Methionine import ATP-binding protein MetN 1 from Staphylococcus aureus (strain MRSA252).